We begin with the raw amino-acid sequence, 385 residues long: Chaperone protein DnaJ (385 aa).

In terms of domain architecture, J spans 5–70; the sequence is DYYEVLGVAK…QKRAAYDRFG (66 aa). A CR-type zinc finger spans residues 141-219; it reads GKTETIRIPT…CSGAGRVNRE (79 aa). Residues Cys-154, Cys-157, Cys-171, Cys-174, Cys-193, Cys-196, Cys-207, and Cys-210 each coordinate Zn(2+). 4 CXXCXGXG motif repeats span residues 154–161, 171–178, 193–200, and 207–214; these read CETCSGTG, CSTCGGYG, CPNCHGRG, and CTACSGAG.

This sequence belongs to the DnaJ family. In terms of assembly, homodimer. Requires Zn(2+) as cofactor.

The protein localises to the cytoplasm. Functionally, participates actively in the response to hyperosmotic and heat shock by preventing the aggregation of stress-denatured proteins and by disaggregating proteins, also in an autonomous, DnaK-independent fashion. Unfolded proteins bind initially to DnaJ; upon interaction with the DnaJ-bound protein, DnaK hydrolyzes its bound ATP, resulting in the formation of a stable complex. GrpE releases ADP from DnaK; ATP binding to DnaK triggers the release of the substrate protein, thus completing the reaction cycle. Several rounds of ATP-dependent interactions between DnaJ, DnaK and GrpE are required for fully efficient folding. Also involved, together with DnaK and GrpE, in the DNA replication of plasmids through activation of initiation proteins. This chain is Chaperone protein DnaJ, found in Methylorubrum extorquens (strain PA1) (Methylobacterium extorquens).